A 302-amino-acid chain; its full sequence is 33 kDa chaperonin (302 aa).

2 disulfides stabilise this stretch: Cys-240–Cys-242 and Cys-273–Cys-276.

It belongs to the HSP33 family. In terms of processing, under oxidizing conditions two disulfide bonds are formed involving the reactive cysteines. Under reducing conditions zinc is bound to the reactive cysteines and the protein is inactive.

It localises to the cytoplasm. Its function is as follows. Redox regulated molecular chaperone. Protects both thermally unfolding and oxidatively damaged proteins from irreversible aggregation. Plays an important role in the bacterial defense system toward oxidative stress. The protein is 33 kDa chaperonin of Synechocystis sp. (strain ATCC 27184 / PCC 6803 / Kazusa).